The sequence spans 382 residues: Lipid-A-disaccharide synthase (382 aa).

Belongs to the LpxB family.

The enzyme catalyses 2-N,3-O-bis[(3R)-3-hydroxytetradecanoyl]-alpha-D-glucosaminyl 1-phosphate + UDP-2-N,3-O-bis[(3R)-3-hydroxytetradecanoyl]-alpha-D-glucosamine = lipid A disaccharide (E. coli) + UDP + H(+). It catalyses the reaction a lipid X + a UDP-2-N,3-O-bis[(3R)-3-hydroxyacyl]-alpha-D-glucosamine = a lipid A disaccharide + UDP + H(+). Its pathway is glycolipid biosynthesis; lipid IV(A) biosynthesis; lipid IV(A) from (3R)-3-hydroxytetradecanoyl-[acyl-carrier-protein] and UDP-N-acetyl-alpha-D-glucosamine: step 5/6. Its function is as follows. Condensation of UDP-2,3-diacylglucosamine and 2,3-diacylglucosamine-1-phosphate to form lipid A disaccharide, a precursor of lipid A, a phosphorylated glycolipid that anchors the lipopolysaccharide to the outer membrane of the cell. This is Lipid-A-disaccharide synthase from Salmonella heidelberg (strain SL476).